The sequence spans 142 residues: Transcriptional regulator MraZ (142 aa).

SpoVT-AbrB domains follow at residues A5–E51 and A77–T120.

The protein belongs to the MraZ family. Forms oligomers.

The protein resides in the cytoplasm. It is found in the nucleoid. In Burkholderia mallei (strain NCTC 10247), this protein is Transcriptional regulator MraZ.